The chain runs to 612 residues: MAGAAGPFLPGSAFWSRDFSDEDQSVAYVPGISTEGNTRSRVKLINPKVDVKVKASRVTDASVSMESLKGAGDSVAEQNFCKRGMKSASLKDLCLEDKRRIANLIKELARVSEEKEVTEERLKTEQESFEKKIRQLEEQNELIIKEREALQLQYRECQELLSLYQKYLSEQQEKLTLSLSELGAARAQEQQITKKKNTPQCSLMDLDGSFLSVARPQNYGQTKARPKSANQVSESFTELRNNSLRPITLHHPKEDLERMSTKTRTCTYESLGRRLINAAPIEKSLPVELKIKEYPNLPPTPSSQYCGHKCSESGAYVHENYHPTNMAPQCCKTHPESCSHCRIPWASQMHDRVILQPRETDIEKQLSEDRRQQLMLQKMELEIEKERLQHLLAQQETKLLLKQQQLHQSRLDYNWLRTQAMFKSRELVADKEFPKPDLDMNGSVSGPSLWKPKCDGWMRGTSTSFKKCPDSPNSGQNQREKKTVEFQSRVENGIQWTCQQNDICRPQRETVTGVRKDASTSPMSTRSPKEPLTPASLSSQHKTSRYETSLLDLVQSLSPNSAPKSQPHPSRAAGTWSTLRPTPQKSIWKKVGTRRSPEDLEENQILEDIFFI.

Serine 20 carries the phosphoserine modification. A coiled-coil region spans residues 90–166; sequence LKDLCLEDKR…CQELLSLYQK (77 aa). Serine 178 carries the phosphoserine modification. Residues 362-406 are a coiled coil; that stretch reads IEKQLSEDRRQQLMLQKMELEIEKERLQHLLAQQETKLLLKQQQL. Residues 462–477 show a composition bias toward polar residues; the sequence is STSFKKCPDSPNSGQN. 2 disordered regions span residues 462-484 and 509-598; these read STSF…KKTV and ETVT…RSPE. Phosphoserine is present on residues serine 471, serine 527, and serine 558. 2 stretches are compositionally biased toward polar residues: residues 555 to 568 and 575 to 585; these read QSLS…SQPH and TWSTLRPTPQK.

In terms of assembly, interacts (via N- and C-terminal domains) with SMC3 (via central hinge region).

Competes with SMC1 for binding to SMC3. May affect the availability of SMC3 to engage in the formation of multimeric protein complexes. The chain is Protein hinderin (Kiaa1328) from Mus musculus (Mouse).